The sequence spans 1475 residues: MDSNENKKNGGDSLELNIINNNNDNNNNNDNNNNSTEEHIESVEQSIKEFNNVANELETEFRDYLVETHKNDVNNIKNDIEAPPSGEFEPGGGAEDEDFKLRNYFKQSKVDAIQNGGKLKKMGVSFKNLTVIGKGADQSVVSDLATPFTFLISKLNVKNWFKKSKPSTFDILHDVSGFCKDGEMLLVLGRPGSGCSSLLRTISNQTGSYVDVLGSVTYGGIDQKKWDKYKAECIYVPEEDTHYPTLTVRETLEFALKCKTPSNRLPNEKKRTFRSKIFNLLLGMFGMVHQAETMVGNEFVRGLSGGERKRITIAESMVSASSINCYDCSTRGLDAASALDYAKSIRIMSDTLHKTTIASFYQASDSIYNLFDRVLILEKGRCVYFGPVGLAKQYFIDMGFECEPRKSTPDFLTGVTNPQERKVRPGFTVPESSAEFEEAWKQSEIYAQSCQEQREYEKLIEIEQPSIDFIQEITEQKSKSTSKSSPYTTGFFVQVIALTIRNFQIIWGDKFSLISRYSSVLVQAPIYGSVFFAMSNSIDGAFTRGGAIFSSILFNALLSEQELSITFTGRRILQKHKTYAMYRPAALHFAQIITEIPIIMIQVFLFSIVTYFMFGLDSSGSKFFINCFTLIGFTLATNNLYRLAGNLTPSVYIGQNIMNVLFLTMMTFTSYIIPYHQMPVWFGWYHYCNPFSFAFRALMGNEFNGLKFDCIEDAIPKGEFYQNETFTPYRSCATTAAEPGQLYFTGERYLEKSFGWEIKPSTQGFIAYNICIVYGFWILFIICNCIVLNIIDWTSGGFTCKVYLKGKAPKMNDVENEKQQNLLVQQATNNMKESLSMPGGLFTWQHMYYSVPIGGNTMKLLLDDIQGWIKPGQMTALMGSSGAGKTTLLDVLAKRKTTGQVQGTTLLNGKPLEIDFERITGYVEQMDVLNPALTVRETLRFSAKLRGEPTISLEEKFKYVEQVLEMMEMKHLGDALIGDLETGVGISVEERKRTTIGVELVAKPHILFLDEPTSGLDAQSSYNIIKFIRKLADAGMPLVCTIHQPSSVLFEHFDRILLLAKGGKTVYFGDIGEKSKTLTSYFQRHGVRECSDSENPAEYILEACGAGRHGKSVVDWPQAWKESPEYQSICQELKELQVTGSSYASIHVDNGKPREYATSLTYQTIEVYKRLNLIWWRSPGYSYGTFIQSALVGLINGWTFYNLQDSANDMNQRIFFIFNVTMLGILLMFLVLPQFITQQDYFKRDYASKFYHWLPFALSIIVVELPFVLVSGTIFFFCSFWTAGLNSDASTNFFFWLIFMLFLFYCVGFGQAIGAVCINITVALNLLPVLIIFLFLFCGVLVIPDQIPHFWKWVYHLNPCTHFLEAMVTNVLKHVNVVCTTDDLIKFVKPSSFSTCSDYAFEFLNGSNHSVSGSVQSLGGDNCGYCLYKNGEEYYSKLGWSYDNRWRGFGIIAGYFVLNIFLVVLFVFLTRKGKR.

Over residues 1-10 the composition is skewed to basic and acidic residues; it reads MDSNENKKNG. Disordered stretches follow at residues 1–40 and 75–94; these read MDSN…EEHI and NIKN…GGGA. A compositionally biased stretch (low complexity) spans 17-34; sequence NIINNNNDNNNNNDNNNN. A coiled-coil region spans residues 25–67; the sequence is NNNNNDNNNNSTEEHIESVEQSIKEFNNVANELETEFRDYLVE. In terms of domain architecture, ABC transporter 1 spans 155–404; sequence LNVKNWFKKS…FIDMGFECEP (250 aa). One can recognise an ABC transmembrane type-2 1 domain in the interval 507-753; the sequence is WGDKFSLISR…FTGERYLEKS (247 aa). A run of 5 helical transmembrane segments spans residues 596–616, 623–641, 653–673, 680–699, and 770–790; these read IPII…MFGL, FFIN…NNLY, IGQN…SYII, VWFG…RALM, and ICIV…VLNI. An ABC transporter 2 domain is found at 842–1087; it reads FTWQHMYYSV…LTSYFQRHGV (246 aa). 879–886 contributes to the ATP binding site; sequence GSSGAGKT. 6 consecutive transmembrane segments (helical) span residues 1180–1200, 1216–1236, 1256–1276, 1293–1313, 1323–1343, and 1449–1469; these read GYSY…GWTF, FIFN…PQFI, FALS…TIFF, FFFW…GQAI, ALNL…VLVI, and FGII…FVFL. The ABC transmembrane type-2 2 domain occupies 1180–1404; that stretch reads GYSYGTFIQS…TCSDYAFEFL (225 aa).

It belongs to the ABC transporter superfamily. ABCG family. PDR (TC 3.A.1.205) subfamily.

It is found in the membrane. This Dictyostelium discoideum (Social amoeba) protein is ABC transporter G family member 15 (abcG15).